The following is a 498-amino-acid chain: ATP synthase subunit beta, chloroplastic (498 aa).

172 to 179 contacts ATP; it reads GGAGVGKT.

The protein belongs to the ATPase alpha/beta chains family. F-type ATPases have 2 components, CF(1) - the catalytic core - and CF(0) - the membrane proton channel. CF(1) has five subunits: alpha(3), beta(3), gamma(1), delta(1), epsilon(1). CF(0) has four main subunits: a(1), b(1), b'(1) and c(9-12).

It is found in the plastid. Its subcellular location is the chloroplast thylakoid membrane. The catalysed reaction is ATP + H2O + 4 H(+)(in) = ADP + phosphate + 5 H(+)(out). Its function is as follows. Produces ATP from ADP in the presence of a proton gradient across the membrane. The catalytic sites are hosted primarily by the beta subunits. This chain is ATP synthase subunit beta, chloroplastic, found in Phoenix dactylifera (Date palm).